The primary structure comprises 99 residues: Transcription and mRNA export factor SUS1 (99 aa).

This sequence belongs to the ENY2 family. As to quaternary structure, component of the nuclear pore complex (NPC)-associated TREX-2 complex (transcription and export complex 2), composed of at least SUS1, SAC3, THP1, SEM1, and CDC31. TREX-2 contains 2 SUS1 chains. The TREX-2 complex interacts with the nucleoporin NUP1. Component of the 1.8 MDa SAGA transcription coactivator-HAT complex. SAGA is built of 5 distinct domains with specialized functions. Within the SAGA complex, SUS1, SGF11, SGF73 and UBP8 form an additional subcomplex of SAGA called the DUB module (deubiquitination module). Interacts directly with THP1, SAC3, SGF11, and with the RNA polymerase II.

The protein localises to the nucleus. It is found in the nucleoplasm. Its subcellular location is the cytoplasm. It localises to the P-body. Its function is as follows. Involved in mRNA export coupled transcription activation by association with both the TREX-2 and the SAGA complexes. At the promoters, SAGA is required for recruitment of the basal transcription machinery. It influences RNA polymerase II transcriptional activity through different activities such as TBP interaction and promoter selectivity, interaction with transcription activators, and chromatin modification through histone acetylation and deubiquitination. Within the SAGA complex, participates in a subcomplex required for deubiquitination of H2B and for the maintenance of steady-state H3 methylation levels. The TREX-2 complex functions in docking export-competent ribonucleoprotein particles (mRNPs) to the nuclear entrance of the nuclear pore complex (nuclear basket). TREX-2 participates in mRNA export and accurate chromatin positioning in the nucleus by tethering genes to the nuclear periphery. May also be involved in cytoplasmic mRNA decay by interaction with components of P-bodies. The sequence is that of Transcription and mRNA export factor SUS1 from Eremothecium gossypii (strain ATCC 10895 / CBS 109.51 / FGSC 9923 / NRRL Y-1056) (Yeast).